The sequence spans 329 residues: MQGSVTEFLKPRLVDIEQVNSTRAKVTLEPLERGFGHTLGNALRRILLSSMPGCAVTEVEIDGVLHEYSSKEGVQEDILEILLNLKGLAVTIEGKDEAMLTLSKSGAGPVIAADITHDGDVTIVNPDHIICHLTGNNDISMRIRVERGRGYVPASARAQTEDDDRPIGRLLVDASFSPVARIAYNVEAARVEQRTDLDKLVIDMTTNGTIDPEEAIRRSATILAEQLDAFVELRDVTEPELKEEKPEFDPILLRPVDDLELTVRSANCLKAEAIHYIGDLVQRTEVELLKTPNLGKKSLTEIKDVLASRGLSLGMRLENWPPASLADDL.

Residues 1 to 234 (MQGSVTEFLK…EQLDAFVELR (234 aa)) form an alpha N-terminal domain (alpha-NTD) region. The tract at residues 248 to 329 (FDPILLRPVD…WPPASLADDL (82 aa)) is alpha C-terminal domain (alpha-CTD).

This sequence belongs to the RNA polymerase alpha chain family. As to quaternary structure, homodimer. The RNAP catalytic core consists of 2 alpha, 1 beta, 1 beta' and 1 omega subunit. When a sigma factor is associated with the core the holoenzyme is formed, which can initiate transcription.

It catalyses the reaction RNA(n) + a ribonucleoside 5'-triphosphate = RNA(n+1) + diphosphate. DNA-dependent RNA polymerase catalyzes the transcription of DNA into RNA using the four ribonucleoside triphosphates as substrates. In Shewanella baltica (strain OS155 / ATCC BAA-1091), this protein is DNA-directed RNA polymerase subunit alpha.